The sequence spans 452 residues: Adenylosuccinate synthetase 2 (452 aa).

GTP-binding positions include Gly-19 to Arg-25 and Gly-47 to Thr-49. Catalysis depends on Asp-20, which acts as the Proton acceptor. Residues Asp-20 and Gly-47 each contribute to the Mg(2+) site. IMP is bound by residues Asp-20–Lys-23, Asn-45–His-48, Thr-131, Arg-145, Gln-223, Thr-238, and Arg-338. Catalysis depends on His-48, which acts as the Proton donor. Position 334–340 (Thr-334–Arg-340) interacts with substrate. Residues Arg-340, Lys-366–Asp-368, and Gly-437–Gly-439 contribute to the GTP site.

This sequence belongs to the adenylosuccinate synthetase family. Homodimer. Requires Mg(2+) as cofactor.

The protein resides in the cytoplasm. The catalysed reaction is IMP + L-aspartate + GTP = N(6)-(1,2-dicarboxyethyl)-AMP + GDP + phosphate + 2 H(+). The protein operates within purine metabolism; AMP biosynthesis via de novo pathway; AMP from IMP: step 1/2. Its function is as follows. Plays an important role in the de novo pathway of purine nucleotide biosynthesis. Catalyzes the first committed step in the biosynthesis of AMP from IMP. The chain is Adenylosuccinate synthetase 2 from Cupriavidus pinatubonensis (strain JMP 134 / LMG 1197) (Cupriavidus necator (strain JMP 134)).